The following is a 571-amino-acid chain: MQISSAFGALIWVVTSYILYAIISNFIISRRHAAKARELKCEEPPFEKNRWPLGIDNLLRALAADKAQQFPVDIIKRFEDLGAHTYRYQILGARNIRTADPKNIQTILANKFNDFDVGPSRRGNFLPMLGNGIFTADGDHWKHSRAIIRPQFTRDQVSDLNLEETHVQNLMKLIGPMIGSNGWIEQIDLLPYFFRLTIDSATEFLFGEPVNSQLRFLPGYQSSKLGSKEERFATAFDSGQMALATRSRFMDSWWLYDSLAFRNSCKIVHDFVDHFVQLALSRGLREKVSDTNSGGKEQYIFLEAIAAETQNPTELRSELLHVLLAGRDTTASHLGWVFHNLARDPVRYKKLRDIIIDEFGTYENPSEITFAKLKACKYLRYVNDESLRLYPVVPINARYANKDTTLPRGGGKDGNSPIFIPKGSSTDFSVHVMHRRKDIWGPDADEFKPERWEGRKVGWEYLPFNGGPRICIGQQFALIEASYVTVRLLQRFDRMESLDKDAVVGHNLTLINCIANGVKTRSSIEFDGQTSQNDDQLRTIVEKPLVQKRSRCPLPAEAKLPKSRKPIGTAS.

A helical membrane pass occupies residues 8–28 (GALIWVVTSYILYAIISNFII). C471 contributes to the heme binding site. The disordered stretch occupies residues 552 to 571 (CPLPAEAKLPKSRKPIGTAS).

Belongs to the cytochrome P450 family. It depends on heme as a cofactor.

The protein localises to the membrane. It functions in the pathway mycotoxin biosynthesis. Functionally, cytochrome P450 monooxygenase; part of the gene cluster that mediates the biosynthesis of 1233A, a natural compound known as an inhibitor of HMG-CoA synthase in the mevalonate pathway and with antibacterial and antifungal activities. The highly reducing polyketide synthase g433 is responsible for the 1233A backbone biosynthesis and the cytochrome P450 monooxygenase g430 catalyzes oxidation of the backbone. The polypeptide is Cytochrome P450 monooxygenase g430 (Fusarium sp).